A 181-amino-acid polypeptide reads, in one-letter code: Large ribosomal subunit protein uL5c (181 aa).

It belongs to the universal ribosomal protein uL5 family. In terms of assembly, part of the 50S ribosomal subunit; contacts the 5S rRNA.

Its subcellular location is the plastid. It is found in the cyanelle. Its function is as follows. Binds 5S rRNA, forms part of the central protuberance of the 50S subunit. This chain is Large ribosomal subunit protein uL5c (rpl5), found in Cyanophora paradoxa.